A 250-amino-acid chain; its full sequence is tRNA:m(4)X modification enzyme TRM13 (250 aa).

The segment covering 1 to 10 has biased composition (basic residues); sequence MGRAPAKRKP. The interval 1-20 is disordered; that stretch reads MGRAPAKRKPSSPPPPPPPG. Over residues 11–20 the composition is skewed to pro residues; the sequence is SSPPPPPPPG. The segment at 62-89 adopts a CHHC U11-48K-type zinc-finger fold; it reads LVPCPVDPSHTVLEENLEAHVGKCPLKK. C65, H71, H81, and C85 together coordinate Zn(2+).

The protein belongs to the methyltransferase TRM13 family.

Its subcellular location is the nucleus. It localises to the cytoplasm. The catalysed reaction is cytidine(4) in tRNA(Pro) + S-adenosyl-L-methionine = 2'-O-methylcytidine(4) in tRNA(Pro) + S-adenosyl-L-homocysteine + H(+). It carries out the reaction cytidine(4) in tRNA(Gly)(GCC) + S-adenosyl-L-methionine = 2'-O-methylcytidine(4) in tRNA(Gly)(GCC) + S-adenosyl-L-homocysteine + H(+). It catalyses the reaction adenosine(4) in tRNA(His) + S-adenosyl-L-methionine = 2'-O-methyladenosine(4) in tRNA(His) + S-adenosyl-L-homocysteine + H(+). TRNA methylase that catalyzes 2'-O-methyladenosine (Am) nucleoside formation on tRNA(Gly)(GCC) in vitro. May 2'-O-methylate cytidine(4) in tRNA(Pro) and tRNA(Gly)(GCC), and adenosine(4) in tRNA(His). Involved in salt stress tolerance. The sequence is that of tRNA:m(4)X modification enzyme TRM13 from Oryza sativa subsp. japonica (Rice).